The following is an 88-amino-acid chain: Kunitz-type U15-theraphotoxin-Hs1f (88 aa).

An N-terminal signal peptide occupies residues 1-27; it reads MGTARFLSAVLLLSVLLMVTFPALLSA. The propeptide occupies 28–33; the sequence is EYHDGR. Residues 37–85 enclose the BPTI/Kunitz inhibitor domain; that stretch reads CSLPSDSGDCLRLFEMWYFDGTTCTKFVYGGYGGNDNRFPTEKACMKRC. Cystine bridges form between C37–C85 and C60–C81.

The protein belongs to the venom Kunitz-type family. 03 (sub-Kunitz) subfamily. In terms of tissue distribution, expressed by the venom gland.

The protein resides in the secreted. Functionally, serine protease inhibitor that inhibits trypsin at a molar ratio of 1:1. This Cyriopagopus schmidti (Chinese bird spider) protein is Kunitz-type U15-theraphotoxin-Hs1f.